A 347-amino-acid polypeptide reads, in one-letter code: Glycerol-3-phosphate dehydrogenase [NAD(P)+] (347 aa).

Trp20, Arg39, and Lys118 together coordinate NADPH. Sn-glycerol 3-phosphate is bound by residues Lys118, Gly152, and Ser154. Residue Ala156 participates in NADPH binding. The sn-glycerol 3-phosphate site is built by Lys207, Asp260, Ser270, Arg271, and Asn272. Lys207 functions as the Proton acceptor in the catalytic mechanism. Arg271 serves as a coordination point for NADPH. Positions 295 and 297 each coordinate NADPH.

It belongs to the NAD-dependent glycerol-3-phosphate dehydrogenase family.

Its subcellular location is the cytoplasm. It catalyses the reaction sn-glycerol 3-phosphate + NAD(+) = dihydroxyacetone phosphate + NADH + H(+). The enzyme catalyses sn-glycerol 3-phosphate + NADP(+) = dihydroxyacetone phosphate + NADPH + H(+). It functions in the pathway membrane lipid metabolism; glycerophospholipid metabolism. Its function is as follows. Catalyzes the reduction of the glycolytic intermediate dihydroxyacetone phosphate (DHAP) to sn-glycerol 3-phosphate (G3P), the key precursor for phospholipid synthesis. The chain is Glycerol-3-phosphate dehydrogenase [NAD(P)+] from Cupriavidus pinatubonensis (strain JMP 134 / LMG 1197) (Cupriavidus necator (strain JMP 134)).